The sequence spans 205 residues: Holliday junction branch migration complex subunit RuvA (205 aa).

Residues 1–64 are domain I; sequence MIGKLKGVID…EDQIKLFGFR (64 aa). The domain II stretch occupies residues 65-143; that stretch reads SDIEREWFRL…AFANVDPAVV (79 aa). The interval 144–154 is flexible linker; it reads HLAGAVDDDRA. Residues 154–205 form a domain III region; the sequence is APRPVKDAISALVNLGYGQPQAAAAIASVARDAGEGAETAQLIRLGLKELAK.

The protein belongs to the RuvA family. As to quaternary structure, homotetramer. Forms an RuvA(8)-RuvB(12)-Holliday junction (HJ) complex. HJ DNA is sandwiched between 2 RuvA tetramers; dsDNA enters through RuvA and exits via RuvB. An RuvB hexamer assembles on each DNA strand where it exits the tetramer. Each RuvB hexamer is contacted by two RuvA subunits (via domain III) on 2 adjacent RuvB subunits; this complex drives branch migration. In the full resolvosome a probable DNA-RuvA(4)-RuvB(12)-RuvC(2) complex forms which resolves the HJ.

Its subcellular location is the cytoplasm. Functionally, the RuvA-RuvB-RuvC complex processes Holliday junction (HJ) DNA during genetic recombination and DNA repair, while the RuvA-RuvB complex plays an important role in the rescue of blocked DNA replication forks via replication fork reversal (RFR). RuvA specifically binds to HJ cruciform DNA, conferring on it an open structure. The RuvB hexamer acts as an ATP-dependent pump, pulling dsDNA into and through the RuvAB complex. HJ branch migration allows RuvC to scan DNA until it finds its consensus sequence, where it cleaves and resolves the cruciform DNA. The protein is Holliday junction branch migration complex subunit RuvA of Afipia carboxidovorans (strain ATCC 49405 / DSM 1227 / KCTC 32145 / OM5) (Oligotropha carboxidovorans).